We begin with the raw amino-acid sequence, 350 residues long: C5a anaphylatoxin chemotactic receptor 1 (350 aa).

The Extracellular segment spans residues 1–37; it reads MDDMCSILTEEELSLYNITDCEFVKPGGLGPVLGPRH. Asparagine 17 is a glycosylation site (N-linked (GlcNAc...) asparagine). Residues 38–64 form a helical membrane-spanning segment; sequence LSALVFYGLVFLLGVPGNALVVWVTGF. Topologically, residues 65–69 are cytoplasmic; it reads RMPRS. The helical transmembrane segment at 70-93 threads the bilayer; it reads VTSLWFLNLALADLLCCLSLPLLM. The Extracellular segment spans residues 94–110; sequence VPLAMDQHWPFGPVACK. Cysteines 109 and 187 form a disulfide. Residues 111 to 132 form a helical membrane-spanning segment; sequence LLKGLLYLIMFCSVLLLVLISL. At 133 to 154 the chain is on the cytoplasmic side; the sequence is DRFLLVSWPVWCQNWRRPRKAG. Residues 155-174 form a helical membrane-spanning segment; the sequence is WVCVGVWLLALLGSIPQFVY. Residues 175–197 are Extracellular-facing; sequence VKEVQLSTSKSECLGLYTVASAW. The helical transmembrane segment at 198-223 threads the bilayer; that stretch reads ANTTARFLVGFVLPFITIVTCHWVVY. Topologically, residues 224-247 are cytoplasmic; sequence SRARRGSGVGPGRVSEARSRRTLR. A helical membrane pass occupies residues 248–270; sequence VIVAVSLSFFLCWFPLHILDFLV. Residues 271 to 287 lie on the Extracellular side of the membrane; it reads LSTPRHSSHSANIQLAH. Residues 288-308 form a helical membrane-spanning segment; sequence TLALCLAYCNSCLNPLLYVCL. Residues 309-350 are Cytoplasmic-facing; sequence GRGFKQNINRSLRNMFNFATEESVTRQSMFKSTSERTQEMNM.

The protein belongs to the G-protein coupled receptor 1 family. In terms of tissue distribution, high expression in head, kidney and posterior kidney, lower levels in peripheral blood leukocytes and spleen, low expression in brain and gills, heart, intestine and very low expression in liver and muscle.

Its subcellular location is the cell membrane. Receptor for the chemotactic and inflammatory peptide anaphylatoxin C5a. This receptor stimulates chemotaxis, granule enzyme release and superoxide anion production. This chain is C5a anaphylatoxin chemotactic receptor 1 (c5ar1), found in Oncorhynchus mykiss (Rainbow trout).